We begin with the raw amino-acid sequence, 90 residues long: Progonadoliberin-3 (90 aa).

Residues 1 to 23 (MEASSRVTVQVLLLALVVQVTLS) form the signal peptide. The residue at position 24 (glutamine 24) is a Pyrrolidone carboxylic acid. Residue glycine 33 is modified to Glycine amide.

This sequence belongs to the GnRH family.

Its subcellular location is the secreted. Stimulates the secretion of gonadotropins. The polypeptide is Progonadoliberin-3 (gnrh3) (Pagrus major (Red sea bream)).